The sequence spans 370 residues: 3-isopropylmalate dehydrogenase (370 aa).

Residue 77 to 90 coordinates NAD(+); it reads GPKWDSVPYEVRPE. The substrate site is built by R97, R107, R135, and D226. The Mg(2+) site is built by D226, D250, and D254. 290-302 is a binding site for NAD(+); that stretch reads GSAPDIAGQGLAN.

It belongs to the isocitrate and isopropylmalate dehydrogenases family. LeuB type 1 subfamily. Homodimer. It depends on Mg(2+) as a cofactor. Requires Mn(2+) as cofactor.

The protein localises to the cytoplasm. It carries out the reaction (2R,3S)-3-isopropylmalate + NAD(+) = 4-methyl-2-oxopentanoate + CO2 + NADH. Its pathway is amino-acid biosynthesis; L-leucine biosynthesis; L-leucine from 3-methyl-2-oxobutanoate: step 3/4. In terms of biological role, catalyzes the oxidation of 3-carboxy-2-hydroxy-4-methylpentanoate (3-isopropylmalate) to 3-carboxy-4-methyl-2-oxopentanoate. The product decarboxylates to 4-methyl-2 oxopentanoate. This Nitrobacter winogradskyi (strain ATCC 25391 / DSM 10237 / CIP 104748 / NCIMB 11846 / Nb-255) protein is 3-isopropylmalate dehydrogenase.